The following is a 226-amino-acid chain: ATP synthase F(0) complex subunit a (226 aa).

N-formylmethionine is present on methionine 1. 6 helical membrane-spanning segments follow: residues 9–29 (FITPVILGLPLVTLIVLFPSL), 68–88 (WTLMLMSLILFIGSTNLLGLL), 97–117 (QLSMNLGMAIPLWAGAVITGF), 138–158 (IPMLVIIETISLFIQPMALAV), 164–184 (ITAGHLLIHLIGGATLALMSI), and 189–209 (ALITFTILILLTILEFAVAMI).

It belongs to the ATPase A chain family. In terms of assembly, component of the ATP synthase complex composed at least of ATP5F1A/subunit alpha, ATP5F1B/subunit beta, ATP5MC1/subunit c (homooctomer), MT-ATP6/subunit a, MT-ATP8/subunit 8, ATP5ME/subunit e, ATP5MF/subunit f, ATP5MG/subunit g, ATP5MK/subunit k, ATP5MJ/subunit j, ATP5F1C/subunit gamma, ATP5F1D/subunit delta, ATP5F1E/subunit epsilon, ATP5PF/subunit F6, ATP5PB/subunit b, ATP5PD/subunit d, ATP5PO/subunit OSCP. ATP synthase complex consists of a soluble F(1) head domain (subunits alpha(3) and beta(3)) - the catalytic core - and a membrane F(0) domain - the membrane proton channel (subunits c, a, 8, e, f, g, k and j). These two domains are linked by a central stalk (subunits gamma, delta, and epsilon) rotating inside the F1 region and a stationary peripheral stalk (subunits F6, b, d, and OSCP). Interacts with DNAJC30; interaction is direct.

The protein resides in the mitochondrion inner membrane. The enzyme catalyses H(+)(in) = H(+)(out). Its function is as follows. Subunit a, of the mitochondrial membrane ATP synthase complex (F(1)F(0) ATP synthase or Complex V) that produces ATP from ADP in the presence of a proton gradient across the membrane which is generated by electron transport complexes of the respiratory chain. ATP synthase complex consist of a soluble F(1) head domain - the catalytic core - and a membrane F(1) domain - the membrane proton channel. These two domains are linked by a central stalk rotating inside the F(1) region and a stationary peripheral stalk. During catalysis, ATP synthesis in the catalytic domain of F(1) is coupled via a rotary mechanism of the central stalk subunits to proton translocation. With the subunit c (ATP5MC1), forms the proton-conducting channel in the F(0) domain, that contains two crucial half-channels (inlet and outlet) that facilitate proton movement from the mitochondrial intermembrane space (IMS) into the matrix. Protons are taken up via the inlet half-channel and released through the outlet half-channel, following a Grotthuss mechanism. This is ATP synthase F(0) complex subunit a from Bos taurus (Bovine).